Consider the following 440-residue polypeptide: Chromosome partition protein MukF (440 aa).

A leucine-zipper region spans residues L208–I236.

This sequence belongs to the MukF family. In terms of assembly, interacts, and probably forms a ternary complex, with MukE and MukB via its C-terminal region. The complex formation is stimulated by calcium or magnesium. It is required for an interaction between MukE and MukB.

The protein localises to the cytoplasm. Its subcellular location is the nucleoid. Functionally, involved in chromosome condensation, segregation and cell cycle progression. May participate in facilitating chromosome segregation by condensation DNA from both sides of a centrally located replisome during cell division. Not required for mini-F plasmid partitioning. Probably acts via its interaction with MukB and MukE. Overexpression results in anucleate cells. It has a calcium binding activity. The polypeptide is Chromosome partition protein MukF (Escherichia coli O157:H7).